The sequence spans 241 residues: Xyloglucan-specific endo-beta-1,4-glucanase 1 (241 aa).

Residues 1 to 19 form the signal peptide; sequence MKGFFAGVVAAATLAVASA. Residue E136 is part of the active site. N-linked (GlcNAc...) asparagine glycans are attached at residues N174 and N190. The active site involves E222.

It belongs to the glycosyl hydrolase 12 (cellulase H) family. Interacts with host apoplastic glucanase inhibitor GIP1.

The protein localises to the secreted. Its subcellular location is the host. The catalysed reaction is xyloglucan + H2O = xyloglucan oligosaccharides.. Its activity is regulated as follows. The xyloglucanase activity is inhibited by the binding of the host apoplastic glucanase inhibitor GIP1. Its function is as follows. Glycoside hydrolase that exhibits xyloglucanase activity. Acts as an important virulence factor during P.sojae infection but also acts as a pathogen-associated molecular pattern (PAMP) in soybean and solanaceous species, where it can trigger defense responses including cell death. XEG1-induced cell death can be suppressed by P.sojae RxLR effectors. The PAMP activity is independent of its xyloglucanase activity. XEG1 induces plant defense responses in a RLP kinase Serk3/Bak1-dependent manner in Nicotiana benthamiana. Moreover, the perception of XEG1 occurs independently of the perception of ethylene-inducing xylanase Eix2 in Tomato. With truncated paralog XLP1, is required to elevate apoplastic sugar during P.sojae infection. The protein is Xyloglucan-specific endo-beta-1,4-glucanase 1 of Phytophthora sojae (strain P6497) (Soybean stem and root rot agent).